A 418-amino-acid chain; its full sequence is Histidine--tRNA ligase (418 aa).

The protein belongs to the class-II aminoacyl-tRNA synthetase family. In terms of assembly, homodimer.

The protein localises to the cytoplasm. It catalyses the reaction tRNA(His) + L-histidine + ATP = L-histidyl-tRNA(His) + AMP + diphosphate + H(+). The chain is Histidine--tRNA ligase from Dehalococcoides mccartyi (strain ATCC BAA-2100 / JCM 16839 / KCTC 5957 / BAV1).